We begin with the raw amino-acid sequence, 561 residues long: Sensor histidine kinase BtsS (561 aa).

At 1–3 the chain is on the cytoplasmic side; the sequence is MYD. The helical transmembrane segment at 4–24 threads the bilayer; it reads FNLVLLLLQQMCVFLVIAWLM. Topologically, residues 25-43 are periplasmic; sequence SKTPLFIPLMQVTVRLPHK. Residues 44 to 64 form a helical membrane-spanning segment; that stretch reads FLCYIVFSIFCIMGTWFGLHI. Over 65–72 the chain is Cytoplasmic; the sequence is DDSIANTR. The chain crosses the membrane as a helical span at residues 73–93; sequence AIGAVMGGLLGGPVVGGLVGL. The Periplasmic segment spans residues 94–108; it reads TGGLHRYSMGGMTAL. The chain crosses the membrane as a helical span at residues 109 to 129; the sequence is SCMISTIVEGLLGGLVHSILI. Topologically, residues 130–140 are cytoplasmic; sequence RRGRTDKVFNP. A helical transmembrane segment spans residues 141 to 161; it reads ITAGAVTFVAEMVQMLIILAI. Over 162-170 the chain is Periplasmic; the sequence is ARPYEDAVR. The chain crosses the membrane as a helical span at residues 171–191; the sequence is LVSNIAAPMMVTNTVGAALFM. Topologically, residues 192 to 561 are cytoplasmic; it reads RILLDKRAMF…TLRLPWRDEA (370 aa). The region spanning 354–559 is the Histidine kinase domain; that stretch reads QILAGQYERQ…RITLRLPWRD (206 aa).

Autophosphorylated.

The protein localises to the cell inner membrane. The catalysed reaction is ATP + protein L-histidine = ADP + protein N-phospho-L-histidine.. Functionally, member of the two-component regulatory system BtsS/BtsR. BtsS is a high-affinity receptor for extracellular pyruvate that activates BtsR by phosphorylation. This is Sensor histidine kinase BtsS from Escherichia coli O6:H1 (strain CFT073 / ATCC 700928 / UPEC).